Here is a 184-residue protein sequence, read N- to C-terminus: dCTP deaminase (184 aa).

DCTP contacts are provided by residues 107 to 112 (KSTYAR), 131 to 133 (TLE), Gln152, Tyr166, and Gln176. Glu133 (proton donor/acceptor) is an active-site residue.

Belongs to the dCTP deaminase family. As to quaternary structure, homotrimer.

The catalysed reaction is dCTP + H2O + H(+) = dUTP + NH4(+). Its pathway is pyrimidine metabolism; dUMP biosynthesis; dUMP from dCTP (dUTP route): step 1/2. In terms of biological role, catalyzes the deamination of dCTP to dUTP. The chain is dCTP deaminase from Erythrobacter litoralis (strain HTCC2594).